The primary structure comprises 319 residues: Aspartate carbamoyltransferase catalytic subunit (319 aa).

Carbamoyl phosphate is bound by residues arginine 65 and threonine 66. Lysine 93 provides a ligand contact to L-aspartate. Positions 115, 149, and 152 each coordinate carbamoyl phosphate. Residues arginine 182 and arginine 237 each contribute to the L-aspartate site. Carbamoyl phosphate contacts are provided by glycine 278 and proline 279.

It belongs to the aspartate/ornithine carbamoyltransferase superfamily. ATCase family. Heterododecamer (2C3:3R2) of six catalytic PyrB chains organized as two trimers (C3), and six regulatory PyrI chains organized as three dimers (R2).

It catalyses the reaction carbamoyl phosphate + L-aspartate = N-carbamoyl-L-aspartate + phosphate + H(+). It functions in the pathway pyrimidine metabolism; UMP biosynthesis via de novo pathway; (S)-dihydroorotate from bicarbonate: step 2/3. Its function is as follows. Catalyzes the condensation of carbamoyl phosphate and aspartate to form carbamoyl aspartate and inorganic phosphate, the committed step in the de novo pyrimidine nucleotide biosynthesis pathway. The protein is Aspartate carbamoyltransferase catalytic subunit of Azoarcus sp. (strain BH72).